The sequence spans 48 residues: Toxin CSTX-14 (48 aa).

4 cysteine pairs are disulfide-bonded: cysteine 3–cysteine 18, cysteine 10–cysteine 27, cysteine 17–cysteine 42, and cysteine 29–cysteine 40.

The protein belongs to the neurotoxin 19 (CSTX) family. 12 subfamily. As to quaternary structure, heterodimer of A and B chains; disulfide-linked. Post-translationally, contains 4 disulfide bonds. Expressed by the venom gland.

The protein localises to the secreted. This chain is Toxin CSTX-14, found in Cupiennius salei (American wandering spider).